The sequence spans 276 residues: ADP-dependent (S)-NAD(P)H-hydrate dehydratase (276 aa).

The region spanning 7 to 274 is the YjeF C-terminal domain; it reads METLNSINIP…NEIPYAMKQL (268 aa). (6S)-NADPHX-binding residues include alanine 42, glycine 105, and histidine 154. Glycine 216 contributes to the AMP binding site. Aspartate 217 serves as a coordination point for (6S)-NADPHX.

Belongs to the NnrD/CARKD family. Homotetramer. Mg(2+) serves as cofactor.

It carries out the reaction (6S)-NADHX + ADP = AMP + phosphate + NADH + H(+). It catalyses the reaction (6S)-NADPHX + ADP = AMP + phosphate + NADPH + H(+). Catalyzes the dehydration of the S-form of NAD(P)HX at the expense of ADP, which is converted to AMP. Together with NAD(P)HX epimerase, which catalyzes the epimerization of the S- and R-forms, the enzyme allows the repair of both epimers of NAD(P)HX, a damaged form of NAD(P)H that is a result of enzymatic or heat-dependent hydration. The protein is ADP-dependent (S)-NAD(P)H-hydrate dehydratase of Staphylococcus aureus (strain NCTC 8325 / PS 47).